A 204-amino-acid polypeptide reads, in one-letter code: Large ribosomal subunit protein uL3c (204 aa).

The segment at 126–155 (HNFTRGPMTHGSKNHREPGSIGQGSTPAKV) is disordered.

It belongs to the universal ribosomal protein uL3 family. As to quaternary structure, part of the 50S ribosomal subunit.

The protein localises to the plastid. It localises to the chloroplast. Functionally, one of the primary rRNA binding proteins, it binds directly near the 3'-end of the 23S rRNA, where it nucleates assembly of the 50S subunit. In Guillardia theta (Cryptophyte), this protein is Large ribosomal subunit protein uL3c (rpl3).